The following is a 171-amino-acid chain: T-cell surface glycoprotein CD3 delta chain (171 aa).

A signal peptide spans 1–21; sequence MEHSTFLSGLVLATLLSQVSP. Over 22–105 the chain is Extracellular; that stretch reads FKIPIEELED…CVELDPATVA (84 aa). A disulfide bond links cysteine 37 and cysteine 73. 2 N-linked (GlcNAc...) asparagine glycosylation sites follow: asparagine 38 and asparagine 74. Residues 106-126 traverse the membrane as a helical segment; it reads GIIVTDVIATLLLALGVFCFA. The Cytoplasmic segment spans residues 127-171; sequence GHETGRLSGAADTQALLRNDQVYQPLRDRDDAQYSHLGGNWARNK. The region spanning 138–166 is the ITAM domain; it reads DTQALLRNDQVYQPLRDRDDAQYSHLGGN. 2 positions are modified to phosphotyrosine: tyrosine 149 and tyrosine 160.

In terms of assembly, the TCR-CD3 complex is composed of a CD3D/CD3E and a CD3G/CD3E heterodimers that preferentially associate with TCRalpha and TCRbeta, respectively, to form TCRalpha/CD3E/CD3G and TCRbeta/CD3G/CD3E trimers. In turn, the hexamer interacts with CD3Z homodimer to form the TCR-CD3 complex. Alternatively, TCRalpha and TCRbeta can be replaced by TCRgamma and TCRdelta. Interacts with coreceptors CD4 and CD8. In terms of processing, phosphorylated on Tyr residues after T-cell receptor triggering by LCK in association with CD4/CD8. In terms of tissue distribution, CD3D is mostly present on T-lymphocytes with its TCR-CD3 partners. Present also in fetal NK-cells.

It localises to the cell membrane. Functionally, part of the TCR-CD3 complex present on T-lymphocyte cell surface that plays an essential role in adaptive immune response. When antigen presenting cells (APCs) activate T-cell receptor (TCR), TCR-mediated signals are transmitted across the cell membrane by the CD3 chains CD3D, CD3E, CD3G and CD3Z. All CD3 chains contain immunoreceptor tyrosine-based activation motifs (ITAMs) in their cytoplasmic domain. Upon TCR engagement, these motifs become phosphorylated by Src family protein tyrosine kinases LCK and FYN, resulting in the activation of downstream signaling pathways. In addition of this role of signal transduction in T-cell activation, CD3D plays an essential role in thymocyte differentiation. Indeed, participates in correct intracellular TCR-CD3 complex assembly and surface expression. In absence of a functional TCR-CD3 complex, thymocytes are unable to differentiate properly. Interacts with CD4 and CD8 and thus serves to establish a functional link between the TCR and coreceptors CD4 and CD8, which is needed for activation and positive selection of CD4 or CD8 T-cells. The chain is T-cell surface glycoprotein CD3 delta chain (CD3D) from Homo sapiens (Human).